Reading from the N-terminus, the 172-residue chain is Disulfide bond formation protein B (172 aa).

Over 1–11 (MNPFRWSFRAQ) the chain is Cytoplasmic. A helical membrane pass occupies residues 12–28 (FLLGFLACAGLLAYAIY). Residues 29 to 46 (VQLHLGLEPCPLCIFQRI) lie on the Periplasmic side of the membrane. The cysteines at positions 38 and 41 are disulfide-linked. Residues 47–63 (AFAALAVFFLIGALHGP) traverse the membrane as a helical segment. Over 64–70 (RAAGARK) the chain is Cytoplasmic. The chain crosses the membrane as a helical span at residues 71–88 (VYGVLSFIAAGVGMGIGA). Residues 89–145 (RHVWVQIRPKDMMSSCGPPLSFLSETMGPFEVFRTVLTGTGDCGNIDWRFLGLSMPM) lie on the Periplasmic side of the membrane. Cysteines 104 and 131 form a disulfide. Residues 146-164 (WSMVWFVGLALWALSAGFK) form a helical membrane-spanning segment. The Cytoplasmic portion of the chain corresponds to 165-172 (ARRSSLHH).

This sequence belongs to the DsbB family.

The protein localises to the cell inner membrane. Its function is as follows. Required for disulfide bond formation in some periplasmic proteins. Acts by oxidizing the DsbA protein. The protein is Disulfide bond formation protein B of Xanthomonas oryzae pv. oryzae (strain MAFF 311018).